The chain runs to 283 residues: Protein-S-isoprenylcysteine O-methyltransferase (283 aa).

Residues 1–15 lie on the Cytoplasmic side of the membrane; sequence MAAARRGSAGSEARL. Residues 16 to 32 form a helical membrane-spanning segment; it reads SLATFLLGASVLALPLL. Residues 33-40 lie on the Lumenal side of the membrane; it reads TRAGLQGR. Residues 41–58 form a helical membrane-spanning segment; the sequence is TGLALYVAGLNALLLLLY. At 59-68 the chain is on the cytoplasmic side; it reads RPPRYQIAIR. Residues 69 to 86 traverse the membrane as a helical segment; that stretch reads ACFLGFVFGCGVLLSFSQ. The Lumenal segment spans residues 87 to 91; sequence SSWNH. A helical membrane pass occupies residues 92–111; it reads FGWYVCSLSLFHYSEYLVTA. Residues 112–130 lie on the Cytoplasmic side of the membrane; the sequence is VNNPKSLSLDSFLLNHSLE. A helical membrane pass occupies residues 131–148; sequence YTVAALSSWIEFTLENIF. Topologically, residues 149 to 153 are lumenal; sequence WPELK. A helical transmembrane segment spans residues 154 to 173; it reads QITWLSATGLLMVVFGECLR. Topologically, residues 174-211 are cytoplasmic; that stretch reads KAAMFTAGSNFNHVVQSEKSDTHTLVTSGVYAWCRHPS. Residues Gln189, 196–199, Tyr204, and 209–212 contribute to the S-adenosyl-L-methionine site; these read HTLV and HPSY. A helical membrane pass occupies residues 212–227; sequence YVGWFYWSIGTQVMLC. Position 228 (Asn228) is a topological domain, lumenal. Residues 229–243 form a helical membrane-spanning segment; sequence PICGVVYALTVWRFF. The Cytoplasmic segment spans residues 244 to 283; sequence RDRTEEEEISLIHFFGEEYLDYKKRVPTGLPFIKGVKVEL. Arg246 contributes to the substrate binding site. S-adenosyl-L-methionine is bound at residue Glu250.

This sequence belongs to the class VI-like SAM-binding methyltransferase superfamily. Isoprenylcysteine carboxyl methyltransferase family. As to expression, highly enriched in adult cerebellum, with a low level expression in other brain regions.

The protein localises to the endoplasmic reticulum membrane. The enzyme catalyses [protein]-C-terminal S-[(2E,6E)-farnesyl]-L-cysteine + S-adenosyl-L-methionine = [protein]-C-terminal S-[(2E,6E)-farnesyl]-L-cysteine methyl ester + S-adenosyl-L-homocysteine. Its function is as follows. Catalyzes the post-translational methylation of isoprenylated C-terminal cysteine residues. In Mus musculus (Mouse), this protein is Protein-S-isoprenylcysteine O-methyltransferase (Icmt).